Consider the following 147-residue polypeptide: Hemoglobin subunit beta-1 (147 aa).

One can recognise a Globin domain in the interval 3-147 (NLTAKERQLI…IADALGKGYH (145 aa)). Heme b-binding residues include histidine 64 and histidine 93.

Belongs to the globin family. Heterotetramer of two alpha chains and two beta chains. As to expression, red blood cells.

Functionally, involved in oxygen transport from the lung to the various peripheral tissues. The polypeptide is Hemoglobin subunit beta-1 (hbb1) (Xenopus tropicalis (Western clawed frog)).